A 378-amino-acid polypeptide reads, in one-letter code: MKILVDENMPYARDLFSRLGEVTAVPGRPIPVAQLADADALMVRSVTKVNESLLAGKPIKFVGTATAGTDHVDEAWLKQAGIGFSAAPGCNAIAVVEYVFSSLLMLAERDGFSLYDRTVGIVGVGNVGRRLQARLEALGIKTLLCDPPRADRGDEGDFRSLDELVQRADILTFHTPLFKDGPYKTLHLADEKLIRSLKPGAILINACRGAVVDNTALLTCLNEGQKLSVVLDVWEGEPELNVELLKKVDIGTSHIAGYTLEGKARGTTQVFEAYSKFIGHEQHVALDTLLPAPEFGRITLHGPLDQPTLKRLVHLVYDVRRDDAPLRKVAGIPGEFDKLRKNYLERREWSSLYVICDDASAASLLCKLGFNAVHHPAR.

2 residues coordinate substrate: serine 45 and threonine 66. NAD(+)-binding residues include aspartate 146 and threonine 175. Arginine 208 is an active-site residue. Aspartate 232 contributes to the NAD(+) binding site. The active site involves glutamate 237. Histidine 254 serves as the catalytic Proton donor. Glycine 257 is an NAD(+) binding site. Position 258 (tyrosine 258) interacts with substrate.

Belongs to the D-isomer specific 2-hydroxyacid dehydrogenase family. PdxB subfamily. As to quaternary structure, homodimer.

Its subcellular location is the cytoplasm. It catalyses the reaction 4-phospho-D-erythronate + NAD(+) = (R)-3-hydroxy-2-oxo-4-phosphooxybutanoate + NADH + H(+). It functions in the pathway cofactor biosynthesis; pyridoxine 5'-phosphate biosynthesis; pyridoxine 5'-phosphate from D-erythrose 4-phosphate: step 2/5. Catalyzes the oxidation of erythronate-4-phosphate to 3-hydroxy-2-oxo-4-phosphonooxybutanoate. This chain is Erythronate-4-phosphate dehydrogenase, found in Escherichia coli (strain K12 / MC4100 / BW2952).